A 252-amino-acid polypeptide reads, in one-letter code: Hydroxyacylglutathione hydrolase (252 aa).

Zn(2+) is bound by residues His54, His56, Asp58, His59, His111, Asp128, and His166.

It belongs to the metallo-beta-lactamase superfamily. Glyoxalase II family. As to quaternary structure, monomer. It depends on Zn(2+) as a cofactor.

The catalysed reaction is an S-(2-hydroxyacyl)glutathione + H2O = a 2-hydroxy carboxylate + glutathione + H(+). It functions in the pathway secondary metabolite metabolism; methylglyoxal degradation; (R)-lactate from methylglyoxal: step 2/2. In terms of biological role, thiolesterase that catalyzes the hydrolysis of S-D-lactoyl-glutathione to form glutathione and D-lactic acid. This chain is Hydroxyacylglutathione hydrolase, found in Aliivibrio salmonicida (strain LFI1238) (Vibrio salmonicida (strain LFI1238)).